Here is a 239-residue protein sequence, read N- to C-terminus: Pyridoxine 5'-phosphate synthase (239 aa).

N7 contacts 3-amino-2-oxopropyl phosphate. Residue D9–H10 participates in 1-deoxy-D-xylulose 5-phosphate binding. R18 lines the 3-amino-2-oxopropyl phosphate pocket. Catalysis depends on H43, which acts as the Proton acceptor. 2 residues coordinate 1-deoxy-D-xylulose 5-phosphate: R45 and H50. The active-site Proton acceptor is E70. T100 is a 1-deoxy-D-xylulose 5-phosphate binding site. Residue H191 is the Proton donor of the active site. 3-amino-2-oxopropyl phosphate is bound by residues G192 and G213–H214.

Belongs to the PNP synthase family. In terms of assembly, homooctamer; tetramer of dimers.

It localises to the cytoplasm. The catalysed reaction is 3-amino-2-oxopropyl phosphate + 1-deoxy-D-xylulose 5-phosphate = pyridoxine 5'-phosphate + phosphate + 2 H2O + H(+). It functions in the pathway cofactor biosynthesis; pyridoxine 5'-phosphate biosynthesis; pyridoxine 5'-phosphate from D-erythrose 4-phosphate: step 5/5. Catalyzes the complicated ring closure reaction between the two acyclic compounds 1-deoxy-D-xylulose-5-phosphate (DXP) and 3-amino-2-oxopropyl phosphate (1-amino-acetone-3-phosphate or AAP) to form pyridoxine 5'-phosphate (PNP) and inorganic phosphate. The sequence is that of Pyridoxine 5'-phosphate synthase from Trichormus variabilis (strain ATCC 29413 / PCC 7937) (Anabaena variabilis).